A 474-amino-acid chain; its full sequence is RNA-binding protein Nova-1 (474 aa).

Residues 1 to 12 are compositionally biased toward polar residues; sequence MAAAPIQQNGTH. The interval 1-43 is disordered; it reads MAAAPIQQNGTHTGVPIDLDPPDSRKRPLEAPPEAGSTKRTNT. Positions 26-42 match the Bipartite nuclear localization signal motif; the sequence is KRPLEAPPEAGSTKRTN. KH domains are found at residues 48–115, 146–212, and 396–463; these read QYFL…HGFI, IKQV…VELI, and KDVV…QYLI. The tract at residues 394–474 is required for RNA binding; the sequence is GSKDVVEIAV…QRITYEQGVR (81 aa).

As to quaternary structure, interacts with PTBP2; the interaction is direct.

It is found in the nucleus. Functionally, functions to regulate alternative splicing in neurons by binding pre-mRNA in a sequence-specific manner to activate exon inclusion or exclusion. It binds specifically to the sequences 5'-YCAY-3' and regulates splicing in only a subset of regulated exons. Binding to an exonic 5'-YCAY-3' cluster changes the protein complexes assembled on pre-mRNA, blocking U1 snRNP binding and exon inclusion, whereas binding to an intronic 5'-YCAY-3' cluster enhances spliceosome assembly and exon inclusion. Binding to 5'-YCAY-3' clusters results in a local and asymmetric action to regulate spliceosome assembly and alternative splicing in neurons. Binding to an exonic 5'-YCAY-3' cluster changed the protein complexes assembled on pre-mRNA, blocking U1 snRNP (small nuclear ribonucleoprotein) binding and exon inclusion, whereas binding to an intronic 5'-YCAY-3' cluster enhanced spliceosome assembly and exon inclusion. With NOVA1, they perform unique biological functions in different brain areas and cell types. Autoregulates its own expression by acting as a splicing repressor. Acts to activate the inclusion of exon E3A in the glycine receptor alpha-2 chain and of exon E9 in gamma-aminobutyric-acid receptor gamma-2 subunit via a distal downstream UCAU-rich intronic splicing enhancer. Acts to regulate a novel glycine receptor alpha-2 chain splice variant (alpha-2N) in developing spinal cord. In Rattus norvegicus (Rat), this protein is RNA-binding protein Nova-1.